A 236-amino-acid polypeptide reads, in one-letter code: Endo-1,4-beta-xylanase 3 (236 aa).

The N-terminal stretch at 1-45 (MQILTWALAALAAIPAVTAAPVETVEASSMDELVERSPNVTLVAR) is a signal peptide. Residues Asn-39 and Asn-106 are each glycosylated (N-linked (GlcNAc...) asparagine). Positions 46–236 (GTPSSTGTHN…SSGSASMTVR (191 aa)) constitute a GH11 domain. The Nucleophile role is filled by Glu-131. The Proton donor role is filled by Glu-223.

It belongs to the glycosyl hydrolase 11 (cellulase G) family.

It is found in the secreted. It carries out the reaction Endohydrolysis of (1-&gt;4)-beta-D-xylosidic linkages in xylans.. The protein operates within glycan degradation; xylan degradation. Endo-1,4-beta-xylanase involved in the hydrolysis of xylan, a major structural heterogeneous polysaccharide found in plant biomass representing the second most abundant polysaccharide in the biosphere, after cellulose. The protein is Endo-1,4-beta-xylanase 3 (XYL3) of Pyricularia grisea (Crabgrass-specific blast fungus).